Consider the following 154-residue polypeptide: Superoxide dismutase [Cu-Zn] (154 aa).

Residues His47, His49, and His64 each contribute to the Cu cation site. Residues Cys58 and Cys147 are joined by a disulfide bond. Residues His64, His72, His81, and Asp84 each coordinate Zn(2+). His121 is a Cu cation binding site.

It belongs to the Cu-Zn superoxide dismutase family. In terms of assembly, homodimer. The cofactor is Cu cation. Requires Zn(2+) as cofactor.

The protein resides in the cytoplasm. It carries out the reaction 2 superoxide + 2 H(+) = H2O2 + O2. Destroys radicals which are normally produced within the cells and which are toxic to biological systems. This chain is Superoxide dismutase [Cu-Zn] (SODCC), found in Pinus sylvestris (Scotch pine).